Here is a 205-residue protein sequence, read N- to C-terminus: 3-demethoxyubiquinol 3-hydroxylase (205 aa).

Residues E54, E84, H87, E136, E168, and H171 each contribute to the Fe cation site.

Belongs to the COQ7 family. Requires Fe cation as cofactor.

The protein resides in the cell membrane. The enzyme catalyses a 5-methoxy-2-methyl-3-(all-trans-polyprenyl)benzene-1,4-diol + AH2 + O2 = a 3-demethylubiquinol + A + H2O. It participates in cofactor biosynthesis; ubiquinone biosynthesis. Catalyzes the hydroxylation of 2-nonaprenyl-3-methyl-6-methoxy-1,4-benzoquinol during ubiquinone biosynthesis. This Paracidovorax citrulli (strain AAC00-1) (Acidovorax citrulli) protein is 3-demethoxyubiquinol 3-hydroxylase.